Consider the following 538-residue polypeptide: MSRTKFIFVTGGVSSSLGKGVTVAALGCLLESRGYTVSLQKMDPYINIDPGTMSPYQHGEVYVTADGAETDLDLGYYERFTHSKLTRKNSVSTGQIYNTVIQRERKGDYLGRTVQVVPHITNEIRNRMYIVAREENPDFIIVEIGGTVGDIESIPFLEAIRQMRYEHGSSNVLFVHLTLVPTITAAGEAKTKPTQHSVKELLGLGIQPDILVCRVSQPMTKEMKNKLSLFCNVKEENVISASDISTSIYEIPKMYKEEKLDEVVLKTMGMELRESNFSEWDKMVKGLLTTKQTVQIAVVGKYISLQDAYRSIYESLSHGGIAHDTKVEFIKVDPENLNKDSYVEILKKVHGILVPGGFGDRGIEGKILAIQYARTNGIPFLGICLGMQCAVVEYGRNVLGLKDANSTEIRPDTEHPVISLLEEQNDIEQMGGTMRLGSYPCKVKENTLSYSEYKSILIHERHRHRFEFTNRYRKQYEENGMIIAGTSPDDNLVEIVEIPKHNWFIGVQFHPEFQSKPTLPHPLFAGFIRASVKYSKKG.

Residues 1-270 (MSRTKFIFVT…DEVVLKTMGM (270 aa)) form an amidoligase domain region. A CTP-binding site is contributed by S15. S15 contacts UTP. 16 to 21 (SLGKGV) provides a ligand contact to ATP. Y56 contributes to the L-glutamine binding site. Residue D73 participates in ATP binding. Mg(2+)-binding residues include D73 and E143. CTP is bound by residues 150-152 (DIE), 190-195 (KTKPTQ), and K226. UTP is bound by residues 190-195 (KTKPTQ) and K226. The 243-residue stretch at 295 to 537 (QIAVVGKYIS…IRASVKYSKK (243 aa)) folds into the Glutamine amidotransferase type-1 domain. G357 contacts L-glutamine. C384 serves as the catalytic Nucleophile; for glutamine hydrolysis. Residues 385-388 (LGMQ), E408, and R465 contribute to the L-glutamine site. Active-site residues include H510 and E512.

It belongs to the CTP synthase family. As to quaternary structure, homotetramer.

The enzyme catalyses UTP + L-glutamine + ATP + H2O = CTP + L-glutamate + ADP + phosphate + 2 H(+). The catalysed reaction is L-glutamine + H2O = L-glutamate + NH4(+). It catalyses the reaction UTP + NH4(+) + ATP = CTP + ADP + phosphate + 2 H(+). It participates in pyrimidine metabolism; CTP biosynthesis via de novo pathway; CTP from UDP: step 2/2. Its activity is regulated as follows. Allosterically activated by GTP, when glutamine is the substrate; GTP has no effect on the reaction when ammonia is the substrate. The allosteric effector GTP functions by stabilizing the protein conformation that binds the tetrahedral intermediate(s) formed during glutamine hydrolysis. Inhibited by the product CTP, via allosteric rather than competitive inhibition. Catalyzes the ATP-dependent amination of UTP to CTP with either L-glutamine or ammonia as the source of nitrogen. Regulates intracellular CTP levels through interactions with the four ribonucleotide triphosphates. In Leptospira interrogans serogroup Icterohaemorrhagiae serovar copenhageni (strain Fiocruz L1-130), this protein is CTP synthase.